The following is a 401-amino-acid chain: Pyruvyl transferase 1 (401 aa).

Positions 1–30 are cleaved as a signal peptide; that stretch reads MFANINIRKSVWLFLLAAVSCTLFIYGVTR. The tract at residues 38–64 is disordered; the sequence is NPSSLTSPSSSTSVDKKKPLFTKSPRN. A compositionally biased stretch (low complexity) spans 39 to 50; that stretch reads PSSLTSPSSSTS.

This sequence belongs to the polysaccharide pyruvyl transferase family.

Its function is as follows. Involved in cell wall biogenesis. Has a role in the addition of Gal-beta1,3 moieties to galactomannans and their subsequent pyruvylation. The polypeptide is Pyruvyl transferase 1 (pvg1) (Schizosaccharomyces pombe (strain 972 / ATCC 24843) (Fission yeast)).